The chain runs to 230 residues: RING finger protein 141 (230 aa).

The N-myristoyl glycine moiety is linked to residue Gly2. Residues 155–192 (CCICMDGRADLILPCAHSFCQKCIDKWSDRHRNCPICR) form an RING-type zinc finger.

Its subcellular location is the membrane. Functionally, may be involved in spermatogenesis. The chain is RING finger protein 141 (RNF141) from Pongo abelii (Sumatran orangutan).